The following is a 1254-amino-acid chain: Receptor tyrosine-protein kinase erbB-2 (1254 aa).

A signal peptide spans 1-22 (MELAAWCGWGLLLALLSPGASG). Residues 23–652 (TQVCTGTDMK…PAEQRASPAT (630 aa)) lie on the Extracellular side of the membrane. Residues C26 and C53 are joined by a disulfide bond. 3 N-linked (GlcNAc...) asparagine glycosylation sites follow: N68, N125, and N187. 14 disulfide bridges follow: C162-C192, C195-C204, C199-C212, C236-C244, C240-C252, C255-C264, C268-C295, C299-C311, C315-C331, C334-C338, C342-C367, C475-C504, C511-C520, and C515-C528. N259 is a glycosylation site (N-linked (GlcNAc...) asparagine). N-linked (GlcNAc...) asparagine glycosylation is present at N530. 8 disulfide bridges follow: C531–C540, C544–C560, C563–C576, C567–C584, C587–C596, C600–C623, C626–C634, and C630–C642. N571 carries an N-linked (GlcNAc...) asparagine glycan. N-linked (GlcNAc...) asparagine glycosylation occurs at N629. A helical membrane pass occupies residues 653–675 (SIIATVVGILLFLVIGVVVGILI). The segment at 676-689 (KRRRQKIRKYTMRR) is required for interaction with KPNB1 and EEA1. The short motif at 676–689 (KRRRQKIRKYTMRR) is the Nuclear localization signal element. Residues 676-1254 (KRRRQKIRKY…PEYLGLDVPV (579 aa)) lie on the Cytoplasmic side of the membrane. Positions 720–987 (LRKVKVLGSG…RMARDPQRFV (268 aa)) constitute a Protein kinase domain. Residues 726 to 734 (LGSGAFGTV) and K753 contribute to the ATP site. The active-site Proton acceptor is the D845. At Y877 the chain carries Phosphotyrosine. 2 disordered regions span residues 1029-1116 (GFFF…SEDP) and 1133-1179 (CSPQ…GKNG). Residues S1054, S1078, S1083, and S1107 each carry the phosphoserine modification. Phosphotyrosine is present on Y1112. Y1139 is subject to Phosphotyrosine; by autocatalysis. Over residues 1146–1161 (RPQPPLTPEGPLPPVR) the composition is skewed to pro residues. T1166 carries the phosphothreonine modification. An interaction with PIK3C2B region spans residues 1195–1197 (EYL). Y1196 is modified (phosphotyrosine). The tract at residues 1223–1254 (DQDPSERGSPPNTFEGTPTAENPEYLGLDVPV) is disordered. Residues 1232 to 1242 (PPNTFEGTPTA) are compositionally biased toward polar residues. Y1247 is modified (phosphotyrosine; by autocatalysis).

Belongs to the protein kinase superfamily. Tyr protein kinase family. EGF receptor subfamily. In terms of assembly, homodimer. Heterodimer with EGFR, ERBB3 and ERBB4. Part of a complex with EGFR and either PIK3C2A or PIK3C2B. May interact with PIK3C2B when phosphorylated on Tyr-1196. Interacts with PRKCABP and PLXNB1. Interacts (when phosphorylated on Tyr-1247) with MEMO. Interacts with MUC1. Interacts (when phosphorylated on Tyr-1139) with GRB7 (via SH2 domain). Interacts (when phosphorylated on Tyr-1247) with ERBIN. Interacts with SRC, KPNB1, RANBP2, EEA1, CRM1, CLTC, PTK6, RPA194, MYOC and ACTB. Interacts (preferentially with the tyrosine phosphorylated form) with CPNE3; this interaction occurs at the cell membrane and is increased in a growth factor heregulin-dependent manner. Interacts with HSP90AA1 and HSP90AB1 in an ATP-dependent manner; the interaction suppresses ERBB2 kinase activity. Interacts with SORL1; this interaction regulates ERBB2 subcellular distribution by promoting its recycling after internalization from endosomes back to the plasma membrane, hence stimulates ERBB2-mediated signaling. Interacts with SH3BGRL. Interacts with ROR1. In terms of processing, autophosphorylated. Autophosphorylation occurs in trans, i.e. one subunit of the dimeric receptor phosphorylates tyrosine residues on the other subunit. Ligand-binding increases phosphorylation on tyrosine residues. Signaling via SEMA4C promotes phosphorylation at Tyr-1247. Dephosphorylated by PTPN12.

The protein localises to the cell membrane. The protein resides in the cell projection. Its subcellular location is the ruffle membrane. It is found in the early endosome. It localises to the cytoplasm. The protein localises to the perinuclear region. The protein resides in the nucleus. The enzyme catalyses L-tyrosyl-[protein] + ATP = O-phospho-L-tyrosyl-[protein] + ADP + H(+). In terms of biological role, protein tyrosine kinase that is part of several cell surface receptor complexes, but that apparently needs a coreceptor for ligand binding. Essential component of a neuregulin-receptor complex, although neuregulins do not interact with it alone. GP30 is a potential ligand for this receptor. Regulates outgrowth and stabilization of peripheral microtubules (MTs). Upon ERBB2 activation, the MEMO1-RHOA-DIAPH1 signaling pathway elicits the phosphorylation and thus the inhibition of GSK3B at cell membrane. This prevents the phosphorylation of APC and CLASP2, allowing its association with the cell membrane. In turn, membrane-bound APC allows the localization of MACF1 to the cell membrane, which is required for microtubule capture and stabilization. In the nucleus is involved in transcriptional regulation. Associates with the 5'-TCAAATTC-3' sequence in the PTGS2/COX-2 promoter and activates its transcription. Implicated in transcriptional activation of CDKN1A; the function involves STAT3 and SRC. Involved in the transcription of rRNA genes by RNA Pol I and enhances protein synthesis and cell growth. The polypeptide is Receptor tyrosine-protein kinase erbB-2 (ERBB2) (Mesocricetus auratus (Golden hamster)).